A 440-amino-acid chain; its full sequence is 3-phosphoshikimate 1-carboxyvinyltransferase (440 aa).

Lys-25, Ser-26, and Arg-30 together coordinate 3-phosphoshikimate. Lys-25 is a binding site for phosphoenolpyruvate. Residues Gly-96 and Arg-124 each coordinate phosphoenolpyruvate. 3-phosphoshikimate-binding residues include Ser-168, Gln-169, Asp-310, and Lys-337. Gln-169 serves as a coordination point for phosphoenolpyruvate. Residue Asp-310 is the Proton acceptor of the active site. Phosphoenolpyruvate contacts are provided by Arg-341, Arg-382, and Lys-409.

The protein belongs to the EPSP synthase family. As to quaternary structure, monomer.

Its subcellular location is the cytoplasm. The enzyme catalyses 3-phosphoshikimate + phosphoenolpyruvate = 5-O-(1-carboxyvinyl)-3-phosphoshikimate + phosphate. The protein operates within metabolic intermediate biosynthesis; chorismate biosynthesis; chorismate from D-erythrose 4-phosphate and phosphoenolpyruvate: step 6/7. Its function is as follows. Catalyzes the transfer of the enolpyruvyl moiety of phosphoenolpyruvate (PEP) to the 5-hydroxyl of shikimate-3-phosphate (S3P) to produce enolpyruvyl shikimate-3-phosphate and inorganic phosphate. This Chlamydia trachomatis serovar D (strain ATCC VR-885 / DSM 19411 / UW-3/Cx) protein is 3-phosphoshikimate 1-carboxyvinyltransferase.